A 393-amino-acid polypeptide reads, in one-letter code: tRNA(Met) cytidine acetate ligase (393 aa).

Residues G81, N142, and R167 each contribute to the ATP site.

Belongs to the TmcAL family.

It localises to the cytoplasm. The enzyme catalyses cytidine(34) in elongator tRNA(Met) + acetate + ATP = N(4)-acetylcytidine(34) in elongator tRNA(Met) + AMP + diphosphate. Catalyzes the formation of N(4)-acetylcytidine (ac(4)C) at the wobble position of elongator tRNA(Met), using acetate and ATP as substrates. First activates an acetate ion to form acetyladenylate (Ac-AMP) and then transfers the acetyl group to tRNA to form ac(4)C34. This is tRNA(Met) cytidine acetate ligase from Bacillus cereus (strain ATCC 14579 / DSM 31 / CCUG 7414 / JCM 2152 / NBRC 15305 / NCIMB 9373 / NCTC 2599 / NRRL B-3711).